A 251-amino-acid polypeptide reads, in one-letter code: Segregation and condensation protein A (251 aa).

Belongs to the ScpA family. As to quaternary structure, component of a cohesin-like complex composed of ScpA, ScpB and the Smc homodimer, in which ScpA and ScpB bind to the head domain of Smc. The presence of the three proteins is required for the association of the complex with DNA.

It is found in the cytoplasm. Participates in chromosomal partition during cell division. May act via the formation of a condensin-like complex containing Smc and ScpB that pull DNA away from mid-cell into both cell halves. The sequence is that of Segregation and condensation protein A from Clostridium botulinum (strain Alaska E43 / Type E3).